We begin with the raw amino-acid sequence, 90 residues long: Small ribosomal subunit protein bS16 (90 aa).

This sequence belongs to the bacterial ribosomal protein bS16 family.

This chain is Small ribosomal subunit protein bS16, found in Anoxybacillus flavithermus (strain DSM 21510 / WK1).